Here is an 841-residue protein sequence, read N- to C-terminus: Axin-1 (841 aa).

The tract at residues 1–78 is disordered; sequence MNIQGKGFPL…GYEPEGSASP (78 aa). Positions 44–61 are enriched in polar residues; that stretch reads FYSSKSDAVRNETSTATP. Residues 88–211 enclose the RGS domain; that stretch reads SLHSLLDDQD…LKSDIYLEYT (124 aa). The segment at 217–269 is disordered; the sequence is SPKIYSDPSSGSGTGKGLPGYLPTLNEDEEWKCDQDTEPEASRDSAPSSRLTQ. A compositionally biased stretch (basic and acidic residues) spans 248 to 259; sequence KCDQDTEPEASR. Positions 348–433 are interaction with GSK3B; that stretch reads LRKQHRREMQ…DADISSGPSV (86 aa). The tract at residues 434–508 is interaction with beta-catenin; sequence ISHKMPSAQP…RSPESGHLGK (75 aa). 3 disordered regions span residues 482–527, 613–635, and 727–756; these read KTPG…TTKS, NIKK…SPED, and RRLE…SGAS. Residues 727–736 are compositionally biased toward basic and acidic residues; that stretch reads RRLEEEEKRA. The region spanning 759 to 841 is the DIX domain; the sequence is CENIVVAYYF…KIIGKVEKID (83 aa).

Homodimer. In terms of processing, ADP-ribosylated by tankyrase TNKS and TNKS2. Poly-ADP-ribosylated protein is recognized by RNF146, followed by ubiquitination at 'Lys-48' and subsequent activation of the Wnt signaling pathway. Post-translationally, ubiquitinated by RNF146 when poly-ADP-ribosylated, leading to its degradation and subsequent activation of the Wnt signaling pathway.

It localises to the cytoplasm. It is found in the nucleus. Its subcellular location is the membrane. The protein resides in the cell membrane. Its function is as follows. Component of the beta-catenin destruction complex required for regulating CTNNB1 levels through phosphorylation and ubiquitination, and modulating Wnt-signaling. Controls dorsoventral patterning via two opposing effects; down-regulates CTNNB1 to inhibit the Wnt signaling pathway and ventralize embryos, but also dorsalizes embryos by activating a Wnt-independent JNK signaling pathway. The chain is Axin-1 (AXIN1) from Gallus gallus (Chicken).